The sequence spans 219 residues: Large ribosomal subunit protein uL3 (219 aa).

Polar residues predominate over residues 133–145; that stretch reads GRASHGNSRSHNV. A disordered region spans residues 133–153; sequence GRASHGNSRSHNVPGSIGMAQ. The residue at position 153 (Gln-153) is an N5-methylglutamine.

Belongs to the universal ribosomal protein uL3 family. As to quaternary structure, part of the 50S ribosomal subunit. Forms a cluster with proteins L14 and L19. Post-translationally, methylated by PrmB.

One of the primary rRNA binding proteins, it binds directly near the 3'-end of the 23S rRNA, where it nucleates assembly of the 50S subunit. This is Large ribosomal subunit protein uL3 from Paraburkholderia phymatum (strain DSM 17167 / CIP 108236 / LMG 21445 / STM815) (Burkholderia phymatum).